Reading from the N-terminus, the 730-residue chain is Hemolytic phospholipase C (730 aa).

The segment at residues 1 to 38 (MTENWKFRRRTFLKHGAQAATLAGLSGLFPETLRRALA) is a signal peptide (tat-type signal).

Belongs to the bacterial phospholipase C family. In terms of processing, predicted to be exported by the Tat system. The position of the signal peptide cleavage has not been experimentally proven.

The enzyme catalyses a 1,2-diacyl-sn-glycero-3-phosphocholine + H2O = phosphocholine + a 1,2-diacyl-sn-glycerol + H(+). Functionally, hydrolyzes sphingomyelin in addition to phosphatidylcholine. This is Hemolytic phospholipase C (plcH) from Pseudomonas aeruginosa (strain ATCC 15692 / DSM 22644 / CIP 104116 / JCM 14847 / LMG 12228 / 1C / PRS 101 / PAO1).